The chain runs to 434 residues: UDP-N-acetylmuramoyl-L-alanyl-D-glutamate--2,6-diaminopimelate ligase (434 aa).

Serine 17 lines the UDP-N-acetyl-alpha-D-muramoyl-L-alanyl-D-glutamate pocket. Residue 68–74 coordinates ATP; sequence GTNGKTT. Residues 111–112, serine 138, glutamine 144, and arginine 146 contribute to the UDP-N-acetyl-alpha-D-muramoyl-L-alanyl-D-glutamate site; that span reads TT. Lysine 178 is modified (N6-carboxylysine). Residues arginine 326, 350–353, glycine 401, and glutamate 405 each bind meso-2,6-diaminopimelate; that span reads DNPR. The short motif at 350-353 is the Meso-diaminopimelate recognition motif element; it reads DNPR.

Belongs to the MurCDEF family. MurE subfamily. Mg(2+) is required as a cofactor. Carboxylation is probably crucial for Mg(2+) binding and, consequently, for the gamma-phosphate positioning of ATP.

It localises to the cytoplasm. It carries out the reaction UDP-N-acetyl-alpha-D-muramoyl-L-alanyl-D-glutamate + meso-2,6-diaminopimelate + ATP = UDP-N-acetyl-alpha-D-muramoyl-L-alanyl-gamma-D-glutamyl-meso-2,6-diaminopimelate + ADP + phosphate + H(+). Its pathway is cell wall biogenesis; peptidoglycan biosynthesis. Catalyzes the addition of meso-diaminopimelic acid to the nucleotide precursor UDP-N-acetylmuramoyl-L-alanyl-D-glutamate (UMAG) in the biosynthesis of bacterial cell-wall peptidoglycan. The sequence is that of UDP-N-acetylmuramoyl-L-alanyl-D-glutamate--2,6-diaminopimelate ligase from Wolinella succinogenes (strain ATCC 29543 / DSM 1740 / CCUG 13145 / JCM 31913 / LMG 7466 / NCTC 11488 / FDC 602W) (Vibrio succinogenes).